The sequence spans 245 residues: Ureidoacrylate amidohydrolase RutB (245 aa).

The active-site Proton acceptor is Asp-41. Lys-150 is a catalytic residue. Cys-183 serves as the catalytic Nucleophile.

This sequence belongs to the isochorismatase family. RutB subfamily.

The catalysed reaction is (Z)-3-ureidoacrylate + H2O + H(+) = (Z)-3-aminoacrylate + NH4(+) + CO2. It catalyses the reaction (Z)-3-ureidoacrylate + H2O = (Z)-3-aminoacrylate + carbamate + H(+). It carries out the reaction (Z)-2-methylureidoacrylate + H2O + H(+) = (Z)-2-methylaminoacrylate + NH4(+) + CO2. Its function is as follows. Hydrolyzes ureidoacrylate to form aminoacrylate and carbamate. The carbamate hydrolyzes spontaneously, thereby releasing one of the nitrogen atoms of the pyrimidine ring as ammonia and one of its carbon atoms as CO2. This is Ureidoacrylate amidohydrolase RutB from Pseudomonas syringae pv. syringae (strain B728a).